Consider the following 591-residue polypeptide: tRNA 5-methylaminomethyl-2-thiouridine biosynthesis bifunctional protein MnmC (591 aa).

Residues 1-232 (MTPTAPSPLV…KRERLEAWRP (232 aa)) are tRNA (mnm(5)s(2)U34)-methyltransferase. Residues 247–591 (IGGGIAGAAL…FDSPVTRSRL (345 aa)) are FAD-dependent cmnm(5)s(2)U34 oxidoreductase.

In the N-terminal section; belongs to the methyltransferase superfamily. tRNA (mnm(5)s(2)U34)-methyltransferase family. It in the C-terminal section; belongs to the DAO family. FAD is required as a cofactor.

It localises to the cytoplasm. The catalysed reaction is 5-aminomethyl-2-thiouridine(34) in tRNA + S-adenosyl-L-methionine = 5-methylaminomethyl-2-thiouridine(34) in tRNA + S-adenosyl-L-homocysteine + H(+). In terms of biological role, catalyzes the last two steps in the biosynthesis of 5-methylaminomethyl-2-thiouridine (mnm(5)s(2)U) at the wobble position (U34) in tRNA. Catalyzes the FAD-dependent demodification of cmnm(5)s(2)U34 to nm(5)s(2)U34, followed by the transfer of a methyl group from S-adenosyl-L-methionine to nm(5)s(2)U34, to form mnm(5)s(2)U34. This Caulobacter vibrioides (strain ATCC 19089 / CIP 103742 / CB 15) (Caulobacter crescentus) protein is tRNA 5-methylaminomethyl-2-thiouridine biosynthesis bifunctional protein MnmC.